The sequence spans 69 residues: uncharacterized protein (69 aa).

In terms of domain architecture, HTH cro/C1-type spans 5-60; the sequence is IREHRKELGLTQEELAERVGVTRQTIIALEKGRYSPSLILAHRIARALGREHIEDI. Positions 16–35 form a DNA-binding region, H-T-H motif; that stretch reads QEELAERVGVTRQTIIALEK.

This is an uncharacterized protein from Methanothermobacter thermautotrophicus (strain ATCC 29096 / DSM 1053 / JCM 10044 / NBRC 100330 / Delta H) (Methanobacterium thermoautotrophicum).